The following is a 255-amino-acid chain: 5'-nucleotidase SurE (255 aa).

Positions 16, 17, 47, and 100 each coordinate a divalent metal cation.

Belongs to the SurE nucleotidase family. A divalent metal cation is required as a cofactor.

It localises to the cytoplasm. The enzyme catalyses a ribonucleoside 5'-phosphate + H2O = a ribonucleoside + phosphate. Functionally, nucleotidase that shows phosphatase activity on nucleoside 5'-monophosphates. This is 5'-nucleotidase SurE from Vibrio vulnificus (strain CMCP6).